The chain runs to 93 residues: Large ribosomal subunit protein uL23 (93 aa).

This sequence belongs to the universal ribosomal protein uL23 family. As to quaternary structure, part of the 50S ribosomal subunit. Contacts protein L29, and trigger factor when it is bound to the ribosome.

Its function is as follows. One of the early assembly proteins it binds 23S rRNA. One of the proteins that surrounds the polypeptide exit tunnel on the outside of the ribosome. Forms the main docking site for trigger factor binding to the ribosome. This Campylobacter jejuni subsp. doylei (strain ATCC BAA-1458 / RM4099 / 269.97) protein is Large ribosomal subunit protein uL23.